Here is a 399-residue protein sequence, read N- to C-terminus: S-adenosylmethionine synthase (399 aa).

Residue H16 coordinates ATP. D18 contributes to the Mg(2+) binding site. E44 is a binding site for K(+). Positions 57 and 100 each coordinate L-methionine. Residues Q100–D110 form a flexible loop region. ATP is bound by residues D174 to K176, R241 to F242, D250, R256 to K257, A273, and K277. D250 is a binding site for L-methionine. Residue K281 participates in L-methionine binding.

It belongs to the AdoMet synthase family. As to quaternary structure, homotetramer; dimer of dimers. It depends on Mg(2+) as a cofactor. The cofactor is K(+).

It localises to the cytoplasm. The catalysed reaction is L-methionine + ATP + H2O = S-adenosyl-L-methionine + phosphate + diphosphate. Its pathway is amino-acid biosynthesis; S-adenosyl-L-methionine biosynthesis; S-adenosyl-L-methionine from L-methionine: step 1/1. Its function is as follows. Catalyzes the formation of S-adenosylmethionine (AdoMet) from methionine and ATP. The overall synthetic reaction is composed of two sequential steps, AdoMet formation and the subsequent tripolyphosphate hydrolysis which occurs prior to release of AdoMet from the enzyme. This is S-adenosylmethionine synthase from Latilactobacillus sakei subsp. sakei (strain 23K) (Lactobacillus sakei subsp. sakei).